Consider the following 996-residue polypeptide: MENLRRAVHPNKDNSRRVEHILKLWVIEAKDLPAKKKYLCELCLDDVLYARTTGKLKTDNVFWGEHFEFHNLPPLRTVTVHLYRETDKKKKKERNSYLGLVSLPAASVAGRQFVEKWYPVVTPNPKGGKGPGPMIRIKARYQTITILPMEMYKEFAEHITNHYLGLCAALEPILSAKTKEEMASALVHILQSTGKVKDFLTDLMMSEVDRCGDNEHLIFRENTLATKAIEEYLKLVGQKYLQDALGEFIKALYESDENCEVDPSKCSAADLPEHQGNLKMCCELAFCKIINSYCVFPRELKEVFASWRQECSSRGRPDISERLISASLFLRFLCPAIMSPSLFNLLQEYPDDRTARTLTLIAKVTQNLANFAKFGSKEEYMSFMNQFLEHEWTNMQRFLLEISNPETLSNTAGFEGYIDLGRELSSLHSLLWEAVSQLDQSIVSKLGPLPRILRDVHTALSTPGSGQLPGTNDLASTPGSGSSSVSAGLQKMVIENDLSGLIDFTRLPSPTPENKDLFFVTRSSGVQPSPARSSSYSEANEPDLQMANGSKSLSMVDLQDARTLDGEAGSPVGPEALPADGQVPATQLVAGWPARAAPVSLAGLATVRRAVPTPTTPGTSEGAPGRPQLLAPLSFQNPVYQMAAGLPLSPRGLGDSGSEGHSSLSSHSNSEELAAAAKLGSFSTAAEELARRPGELARRQMSLTEKGGQPTVPRQNSAGPQRRIDQPPPPPPPPPPAPRGRTPPTMLSTLQYPRPSSGTLASASPDWAGPGTRLRQQSSSSKGDSPELKPRALHKQGPSPVSPNALDRTAAWLLTMNAQLLEDEGLGPDPPHRDRLRSKEELSQAEKDLAVLQDKLRISTKKLEEYETLFKCQEETTQKLVLEYQARLEEGEERLRRQQEDKDVQMKGIISRLMSVEEELKKDHAEMQAAVDSKQKIIDAQEKRIASLDAANARLMSALTQLKERYSMRARNGVSPTNPTKLQITENGEFRNSSNC.

The region spanning 1 to 118 (MENLRRAVHP…AGRQFVEKWY (118 aa)) is the C2 domain. The Ras-GAP domain maps to 194 to 402 (GKVKDFLTDL…TNMQRFLLEI (209 aa)). The segment at 453 to 750 (LRDVHTALST…RTPPTMLSTL (298 aa)) is necessary for interaction with AKT1. A compositionally biased stretch (polar residues) spans 460 to 475 (LSTPGSGQLPGTNDLA). Disordered stretches follow at residues 460–486 (LSTP…SSVS) and 522–545 (RSSG…PDLQ). Residues 476-486 (STPGSGSSSVS) are compositionally biased toward low complexity. The segment covering 522 to 538 (RSSGVQPSPARSSSYSE) has biased composition (polar residues). S535 is modified (phosphoserine; by MAP3K5 and RIPK1). Position 554 is a phosphoserine (S554). 5 disordered regions span residues 611 to 630 (VPTP…PQLL), 650 to 672 (PRGL…NSEE), 702 to 805 (SLTE…SPNA), 822 to 841 (EDEG…SKEE), and 971 to 996 (RNGV…SSNC). Low complexity predominate over residues 659 to 672 (EGHSSLSSHSNSEE). A compositionally biased stretch (pro residues) spans 726–738 (QPPPPPPPPPPAP). Composition is skewed to polar residues over residues 746-762 (MLST…TLAS) and 774-783 (LRQQSSSSKG). Phosphoserine is present on residues S785 and S802. Over residues 830–841 (PPHRDRLRSKEE) the composition is skewed to basic and acidic residues. Positions 832–966 (HRDRLRSKEE…SALTQLKERY (135 aa)) form a coiled coil. Positions 974-996 (VSPTNPTKLQITENGEFRNSSNC) are enriched in polar residues.

On plasma membrane, exists in an inactive form complexed with TNFR1; in response to TNF-alpha, dissociates from TNFR1 complex, translocates to cytoplasm and forms part of an intracellular signaling complex comprising TRADD, RIPK1, TRAF2 and MAP3K5. Interacts (via NPXY motif) with DAB2 (via PID domain). Interacts (via PH domain) with ERN1. Part of a cytoplasmic complex made of HIPK1, DAB2IP and MAP3K5 in response to TNF-alpha; this complex formation promotes MAP3K5-JNK activation and subsequent apoptosis. Interacts (via N-terminal domain) with JAK2; the interaction occurs in a IFNG/IFN-gamma-dependent manner and inhibits JAK2 autophosphorylation activity. Interacts (via C2 domain) with GSK3B; the interaction stimulates GSK3B kinase activation. Interacts (via C2 domain) with PPP2CA. Interacts (via proline-rich motif) with a regulatory p85 subunit (via SH3 domain) of the PI3K complex; the interaction inhibits the PI3K-AKT complex activity in a TNF-alpha-dependent manner in prostate cancer (PCa) cells. Interacts with AKT1; the interaction is increased in a TNF-alpha-induced manner. Interacts (via C2 domain and active form preferentially) with KDR/VEGFR2 (tyrosine-phosphorylated active form preferentially); the interaction occurs at the late phase of VEGFA response and inhibits KDR/VEGFR2 activity. Interacts (via N-terminus C2 domain) with MAP3K5 ('Ser-966' dephosphorylated form preferentially); the interaction occurs in a TNF-alpha-induced manner. Interacts (via Ras-GAP domain) with the catalytic subunit of protein phosphatase PP2A; the interaction occurs in resting endothelial cells, is further enhanced by TNF-alpha stimulation and is required to bridge PP2A to MAP3K5. Interacts (via C-terminus PER domain) with TRAF2 (via zinc fingers); the interaction occurs in a TNF-alpha-dependent manner. Interacts with 14-3-3 proteins; the interaction occurs in a TNF-alpha-dependent manner. Interacts (via Ras-GAP domain) with RIPK1 (via kinase domain); the interaction occurs in a TNF-alpha-dependent manner. Interacts with DAB1 and DAB2. Interacts with RAB40C; acts as a GAP for RAB40C. In terms of processing, in response to TNF-alpha-induction, phosphorylated at Ser-535; phosphorylation leads to a conformational change, and thus, increases its association with 14-3-3 proteins, MAP3K5, RIPK1 and TRAF2 in endothelial cells; also stimulates regulatory p85 subunit sequestring and PI3K-p85 complex activity inhibition. In terms of tissue distribution, expressed in brain, lung, thymus, bladder and skeletal muscle. Up-regulatedd during prostate degeneration.

It is found in the cytoplasm. Its subcellular location is the cell membrane. The protein resides in the membrane. The protein localises to the cell projection. It localises to the dendrite. Functionally, functions as a scaffold protein implicated in the regulation of a large spectrum of both general and specialized signaling pathways. Involved in several processes such as innate immune response, inflammation and cell growth inhibition, apoptosis, cell survival, angiogenesis, cell migration and maturation. Also plays a role in cell cycle checkpoint control; reduces G1 phase cyclin levels resulting in G0/G1 cell cycle arrest. Mediates signal transduction by receptor-mediated inflammatory signals, such as the tumor necrosis factor (TNF), interferon (IFN) or lipopolysaccharide (LPS). Modulates the balance between phosphatidylinositol 3-kinase (PI3K)-AKT-mediated cell survival and apoptosis stimulated kinase (MAP3K5)-JNK signaling pathways; sequesters both AKT1 and MAP3K5 and counterbalances the activity of each kinase by modulating their phosphorylation status in response to pro-inflammatory stimuli. Acts as a regulator of the endoplasmic reticulum (ER) unfolded protein response (UPR) pathway; specifically involved in transduction of the ER stress-response to the JNK cascade through ERN1. Mediates TNF-alpha-induced apoptosis activation by facilitating dissociation of inhibitor 14-3-3 from MAP3K5; recruits the PP2A phosphatase complex which dephosphorylates MAP3K5 on 'Ser-966', leading to the dissociation of 13-3-3 proteins and activation of the MAP3K5-JNK signaling pathway in endothelial cells. Acts a negative regulator in the IFN-gamma-mediated JAK-STAT signaling cascade by inhibiting smooth muscle cell (VSMCs) proliferation and intimal expansion, and thus, prevents graft arteriosclerosis (GA). Acts as a GTPase-activating protein (GAP) for the ADP ribosylation factor 6 (ARF6). Promotes hydrolysis of the ARF6-bound GTP and thus, negatively regulates phosphatidylinositol 4,5-bisphosphate (PIP2)-dependent TLR4-TIRAP-MyD88 and NF-kappa-B signaling pathways in endothelial cells in response to lipopolysaccharides (LPS). Binds specifically to phosphatidylinositol 4-phosphate (PtdIns4P) and phosphatidylinositol 3-phosphate (PtdIns3P). In response to vascular endothelial growth factor (VEGFA), acts as a negative regulator of the VEGFR2-PI3K-mediated angiogenic signaling pathway by inhibiting endothelial cell migration and tube formation. In the developing brain, promotes both the transition from the multipolar to the bipolar stage and the radial migration of cortical neurons from the ventricular zone toward the superficial layer of the neocortex in a glial-dependent locomotion process. Probable downstream effector of the Reelin signaling pathway; promotes Purkinje cell (PC) dendrites development and formation of cerebellar synapses. Also functions as a tumor suppressor protein in prostate cancer progression; prevents cell proliferation and epithelial-to-mesenchymal transition (EMT) through activation of the glycogen synthase kinase-3 beta (GSK3B)-induced beta-catenin and inhibition of PI3K-AKT and Ras-MAPK survival downstream signaling cascades, respectively. Mediates TNF/TRAF2-induced MAP3K5-JNK activation, while it inhibits CHUK-NF-kappa-B signaling. Functions as a Ras GTPase-activating protein. May act as a tumor suppressor gene. The protein is Disabled homolog 2-interacting protein (Dab2ip) of Rattus norvegicus (Rat).